Here is a 252-residue protein sequence, read N- to C-terminus: 3-dehydroquinate dehydratase (252 aa).

Residues Ser21, 46 to 48 (EWR), and Arg82 contribute to the 3-dehydroquinate site. The active-site Proton donor/acceptor is His143. The Schiff-base intermediate with substrate role is filled by Lys170. 3-dehydroquinate is bound by residues Arg213, Ser232, and Gln236.

It belongs to the type-I 3-dehydroquinase family. In terms of assembly, homodimer.

It carries out the reaction 3-dehydroquinate = 3-dehydroshikimate + H2O. The protein operates within metabolic intermediate biosynthesis; chorismate biosynthesis; chorismate from D-erythrose 4-phosphate and phosphoenolpyruvate: step 3/7. Involved in the third step of the chorismate pathway, which leads to the biosynthesis of aromatic amino acids. Catalyzes the cis-dehydration of 3-dehydroquinate (DHQ) and introduces the first double bond of the aromatic ring to yield 3-dehydroshikimate. This Shigella flexneri serotype 5b (strain 8401) protein is 3-dehydroquinate dehydratase.